The primary structure comprises 503 residues: Glycerol kinase (503 aa).

Threonine 14 lines the ADP pocket. ATP contacts are provided by threonine 14, threonine 15, and serine 16. Threonine 14 is a binding site for sn-glycerol 3-phosphate. Arginine 18 is a binding site for ADP. Arginine 84, glutamate 85, tyrosine 136, and aspartate 246 together coordinate sn-glycerol 3-phosphate. Glycerol is bound by residues arginine 84, glutamate 85, tyrosine 136, aspartate 246, and glutamine 247. ADP contacts are provided by threonine 268 and glycine 311. The ATP site is built by threonine 268, glycine 311, glutamine 315, and glycine 412. ADP-binding residues include glycine 412 and asparagine 416.

This sequence belongs to the FGGY kinase family.

It carries out the reaction glycerol + ATP = sn-glycerol 3-phosphate + ADP + H(+). It participates in polyol metabolism; glycerol degradation via glycerol kinase pathway; sn-glycerol 3-phosphate from glycerol: step 1/1. With respect to regulation, inhibited by fructose 1,6-bisphosphate (FBP). Key enzyme in the regulation of glycerol uptake and metabolism. Catalyzes the phosphorylation of glycerol to yield sn-glycerol 3-phosphate. In Haemophilus influenzae (strain PittGG), this protein is Glycerol kinase.